Here is a 270-residue protein sequence, read N- to C-terminus: 3-phenylpropionate-dihydrodiol/cinnamic acid-dihydrodiol dehydrogenase (270 aa).

10–34 is a binding site for NAD(+); that stretch reads FITGGGSGLGLALVERFIEEGAQVA. Ser-143 contributes to the substrate binding site. Tyr-156 serves as the catalytic Proton acceptor.

The protein belongs to the short-chain dehydrogenases/reductases (SDR) family.

The enzyme catalyses 3-(cis-5,6-dihydroxycyclohexa-1,3-dien-1-yl)propanoate + NAD(+) = 3-(2,3-dihydroxyphenyl)propanoate + NADH + H(+). It carries out the reaction (2E)-3-(cis-5,6-dihydroxycyclohexa-1,3-dien-1-yl)prop-2-enoate + NAD(+) = (2E)-3-(2,3-dihydroxyphenyl)prop-2-enoate + NADH + H(+). The protein operates within aromatic compound metabolism; 3-phenylpropanoate degradation. Functionally, converts 3-phenylpropionate-dihydrodiol (PP-dihydrodiol) and cinnamic acid-dihydrodiol (CI-dihydrodiol) into 3-(2,3-dihydroxylphenyl)propanoic acid (DHPP) and 2,3-dihydroxicinnamic acid (DHCI), respectively. This chain is 3-phenylpropionate-dihydrodiol/cinnamic acid-dihydrodiol dehydrogenase, found in Escherichia coli (strain SMS-3-5 / SECEC).